A 154-amino-acid polypeptide reads, in one-letter code: Large ribosomal subunit protein uL13 (154 aa).

This sequence belongs to the universal ribosomal protein uL13 family. As to quaternary structure, part of the 50S ribosomal subunit.

This protein is one of the early assembly proteins of the 50S ribosomal subunit, although it is not seen to bind rRNA by itself. It is important during the early stages of 50S assembly. This chain is Large ribosomal subunit protein uL13, found in Allorhizobium ampelinum (strain ATCC BAA-846 / DSM 112012 / S4) (Agrobacterium vitis (strain S4)).